Reading from the N-terminus, the 423-residue chain is COP9 signalosome complex subunit 3 (423 aa).

A PCI domain is found at 197–365 (NFERAMYFYE…GMVCFHDSPE (169 aa)). Residues 401 to 410 (PQFVQKSMGS) show a composition bias toward polar residues. Positions 401-423 (PQFVQKSMGSQEDDSGSKPSSYS) are disordered.

It belongs to the CSN3 family. As to quaternary structure, component of the CSN complex, probably composed of cops1, cops2, cops3, cops4, cops5, cops6, cops7, cops8 and cops9.

It is found in the cytoplasm. The protein resides in the nucleus. Component of the COP9 signalosome complex (CSN), a complex involved in various cellular and developmental processes. The CSN complex is an essential regulator of the ubiquitin (Ubl) conjugation pathway by mediating the deneddylation of the cullin subunits of E3 ligase complexes, leading to modify the Ubl ligase activity. This is COP9 signalosome complex subunit 3 (cops3) from Xenopus laevis (African clawed frog).